Here is a 470-residue protein sequence, read N- to C-terminus: tRNA-2-methylthio-N(6)-dimethylallyladenosine synthase (470 aa).

The MTTase N-terminal domain occupies Pro20–Ser138. [4Fe-4S] cluster contacts are provided by Cys29, Cys65, Cys99, Cys176, Cys180, and Cys183. A Radical SAM core domain is found at Arg162–Ala398. The region spanning Glu401–Glu464 is the TRAM domain.

It belongs to the methylthiotransferase family. MiaB subfamily. In terms of assembly, monomer. [4Fe-4S] cluster is required as a cofactor.

Its subcellular location is the cytoplasm. It carries out the reaction N(6)-dimethylallyladenosine(37) in tRNA + (sulfur carrier)-SH + AH2 + 2 S-adenosyl-L-methionine = 2-methylsulfanyl-N(6)-dimethylallyladenosine(37) in tRNA + (sulfur carrier)-H + 5'-deoxyadenosine + L-methionine + A + S-adenosyl-L-homocysteine + 2 H(+). Functionally, catalyzes the methylthiolation of N6-(dimethylallyl)adenosine (i(6)A), leading to the formation of 2-methylthio-N6-(dimethylallyl)adenosine (ms(2)i(6)A) at position 37 in tRNAs that read codons beginning with uridine. In Symbiobacterium thermophilum (strain DSM 24528 / JCM 14929 / IAM 14863 / T), this protein is tRNA-2-methylthio-N(6)-dimethylallyladenosine synthase.